The primary structure comprises 206 residues: Holliday junction branch migration complex subunit RuvA (206 aa).

Positions 1–64 are domain I; sequence MIGKLKGTVD…EDQIRLFGFV (64 aa). The interval 65-143 is domain II; it reads TEAEREWFRL…AFTAADPGLA (79 aa). Residues 144–154 are flexible linker; the sequence is RLAADVEATEA. Positions 154-206 are domain III; sequence AAGGALADAVSALVNLGYGQAQAHTAIAAAGRKAGEDATTETLIRLGLKELAK.

Belongs to the RuvA family. In terms of assembly, homotetramer. Forms an RuvA(8)-RuvB(12)-Holliday junction (HJ) complex. HJ DNA is sandwiched between 2 RuvA tetramers; dsDNA enters through RuvA and exits via RuvB. An RuvB hexamer assembles on each DNA strand where it exits the tetramer. Each RuvB hexamer is contacted by two RuvA subunits (via domain III) on 2 adjacent RuvB subunits; this complex drives branch migration. In the full resolvosome a probable DNA-RuvA(4)-RuvB(12)-RuvC(2) complex forms which resolves the HJ.

It localises to the cytoplasm. Functionally, the RuvA-RuvB-RuvC complex processes Holliday junction (HJ) DNA during genetic recombination and DNA repair, while the RuvA-RuvB complex plays an important role in the rescue of blocked DNA replication forks via replication fork reversal (RFR). RuvA specifically binds to HJ cruciform DNA, conferring on it an open structure. The RuvB hexamer acts as an ATP-dependent pump, pulling dsDNA into and through the RuvAB complex. HJ branch migration allows RuvC to scan DNA until it finds its consensus sequence, where it cleaves and resolves the cruciform DNA. This Azorhizobium caulinodans (strain ATCC 43989 / DSM 5975 / JCM 20966 / LMG 6465 / NBRC 14845 / NCIMB 13405 / ORS 571) protein is Holliday junction branch migration complex subunit RuvA.